The following is a 685-amino-acid chain: Galactocerebrosidase (685 aa).

The first 42 residues, 1–42 (MAEWLLSASRQRRVKAMTAAAGSAGRAAVPFLLCALLAPGGA), serve as a signal peptide directing secretion. Position 109 (Thr-109) interacts with substrate. The N-linked (GlcNAc...) asparagine glycan is linked to Asn-143. 2 residues coordinate substrate: Trp-151 and Asn-197. The active-site Proton donor/acceptor is the Glu-198. Residue Glu-274 is the Nucleophile of the active site. A disulfide bridge connects residues Cys-287 and Cys-394. Asn-379 carries an N-linked (GlcNAc...) asparagine glycan. Substrate is bound at residue Arg-396. N-linked (GlcNAc...) asparagine glycosylation is found at Asn-403, Asn-451, Asn-556, Asn-559, and Asn-602.

The protein belongs to the glycosyl hydrolase 59 family.

The protein resides in the lysosome. The enzyme catalyses a beta-D-galactosyl-(1&lt;-&gt;1')-N-acylsphing-4-enine + H2O = an N-acylsphing-4-enine + D-galactose. It carries out the reaction beta-D-galactosyl-(1&lt;-&gt;1)-sphing-4-enine + H2O = sphing-4-enine + D-galactose. It catalyses the reaction a D-galactosylceramide + H2O = an N-acyl-sphingoid base + D-galactose. Hydrolyzes the galactose ester bonds of glycolipids such as galactosylceramide and galactosylsphingosine. Enzyme with very low activity responsible for the lysosomal catabolism of galactosylceramide, a major lipid in myelin, kidney and epithelial cells of small intestine and colon. The polypeptide is Galactocerebrosidase (Macaca mulatta (Rhesus macaque)).